Reading from the N-terminus, the 125-residue chain is Holo-[acyl-carrier-protein] synthase (125 aa).

2 residues coordinate Mg(2+): Asp-8 and Glu-56.

The protein belongs to the P-Pant transferase superfamily. AcpS family. Mg(2+) is required as a cofactor.

The protein localises to the cytoplasm. The catalysed reaction is apo-[ACP] + CoA = holo-[ACP] + adenosine 3',5'-bisphosphate + H(+). Its function is as follows. Transfers the 4'-phosphopantetheine moiety from coenzyme A to a Ser of acyl-carrier-protein. The sequence is that of Holo-[acyl-carrier-protein] synthase from Borrelia hermsii (strain HS1 / DAH).